Here is a 91-residue protein sequence, read N- to C-terminus: Soluble cytochrome b558 (91 aa).

Residues 8–88 enclose the Cytochrome b5 heme-binding domain; the sequence is LPVFTLEQVA…LQRYLIGTLE (81 aa). Cysteine 25 and cysteine 54 form a disulfide bridge. Heme is bound by residues histidine 43 and histidine 71.

The sequence is that of Soluble cytochrome b558 from Ectothiorhodospira shaposhnikovii (Ectothiorhodospira vacuolata).